A 353-amino-acid chain; its full sequence is Photosystem II D2 protein (353 aa).

Threonine 2 is subject to N-acetylthreonine. Position 2 is a phosphothreonine (threonine 2). A helical membrane pass occupies residues 41-61; the sequence is CAYFALGGWFTGTTFVTSWYT. Histidine 118 contributes to the chlorophyll a binding site. The helical transmembrane segment at 125–141 threads the bilayer; the sequence is GFMLRQFELARSVQLRP. Pheophytin a-binding residues include glutamine 130 and asparagine 143. Residues 153–166 traverse the membrane as a helical segment; it reads VFVSVFFIYPLGQS. Chlorophyll a is bound at residue histidine 198. A helical transmembrane segment spans residues 208–228; it reads AALLCAIHGATVENTLFEDGD. A plastoquinone-binding residues include histidine 215 and phenylalanine 262. Histidine 215 serves as a coordination point for Fe cation. Histidine 269 provides a ligand contact to Fe cation. The chain crosses the membrane as a helical span at residues 279-295; it reads GLWMSALGVVGLALNLR.

The protein belongs to the reaction center PufL/M/PsbA/D family. PSII is composed of 1 copy each of membrane proteins PsbA, PsbB, PsbC, PsbD, PsbE, PsbF, PsbH, PsbI, PsbJ, PsbK, PsbL, PsbM, PsbT, PsbX, PsbY, PsbZ, Psb30/Ycf12, at least 3 peripheral proteins of the oxygen-evolving complex and a large number of cofactors. It forms dimeric complexes. The cofactor is The D1/D2 heterodimer binds P680, chlorophylls that are the primary electron donor of PSII, and subsequent electron acceptors. It shares a non-heme iron and each subunit binds pheophytin, quinone, additional chlorophylls, carotenoids and lipids. There is also a Cl(-1) ion associated with D1 and D2, which is required for oxygen evolution. The PSII complex binds additional chlorophylls, carotenoids and specific lipids..

The protein resides in the plastid membrane. The catalysed reaction is 2 a plastoquinone + 4 hnu + 2 H2O = 2 a plastoquinol + O2. In terms of biological role, photosystem II (PSII) is a light-driven water:plastoquinone oxidoreductase that uses light energy to abstract electrons from H(2)O, generating O(2) and a proton gradient subsequently used for ATP formation. It consists of a core antenna complex that captures photons, and an electron transfer chain that converts photonic excitation into a charge separation. The D1/D2 (PsbA/PsbD) reaction center heterodimer binds P680, the primary electron donor of PSII as well as several subsequent electron acceptors. D2 is needed for assembly of a stable PSII complex. This Cuscuta exaltata (Tall dodder) protein is Photosystem II D2 protein.